The sequence spans 275 residues: NAD kinase (275 aa).

The Proton acceptor role is filled by Asp-68. NAD(+)-binding positions include Asp-68–Gly-69, Arg-73, Asn-136–Glu-137, Lys-147, Arg-164, Asp-166, Thr-177–Ser-182, Ala-201, and Gln-236.

The protein belongs to the NAD kinase family. It depends on a divalent metal cation as a cofactor.

Its subcellular location is the cytoplasm. It catalyses the reaction NAD(+) + ATP = ADP + NADP(+) + H(+). Involved in the regulation of the intracellular balance of NAD and NADP, and is a key enzyme in the biosynthesis of NADP. Catalyzes specifically the phosphorylation on 2'-hydroxyl of the adenosine moiety of NAD to yield NADP. This Methanosarcina acetivorans (strain ATCC 35395 / DSM 2834 / JCM 12185 / C2A) protein is NAD kinase.